The chain runs to 219 residues: Probable 3-beta-hydroxysteroid-Delta(8),Delta(7)-isomerase (219 aa).

4 helical membrane passes run 29–49, 62–82, 119–139, and 181–201; these read ILVPYLATSLFLLLAVWLISG, LMCWWAFTGLTHIIIEGTFVF, VEGITAVLEGPASLLAVYAIA, and FWAYFIGANSSWVVIPTMIAI. Residues 58–200 enclose the EXPERA domain; that stretch reads TDRWLMCWWA…SWVVIPTMIA (143 aa).

This sequence belongs to the EBP family.

It localises to the endoplasmic reticulum membrane. The enzyme catalyses lathosterol = 5alpha-cholest-8-en-3beta-ol. The protein operates within steroid biosynthesis; sterol biosynthesis. Catalyzes the conversion of Delta(8)-sterols to their corresponding Delta(7)-isomers. The sequence is that of Probable 3-beta-hydroxysteroid-Delta(8),Delta(7)-isomerase from Oryza sativa subsp. japonica (Rice).